The following is a 425-amino-acid chain: tRNA(Ile)-lysidine synthase (425 aa).

27 to 32 (SGGLDS) is a binding site for ATP.

The protein belongs to the tRNA(Ile)-lysidine synthase family.

It is found in the cytoplasm. It carries out the reaction cytidine(34) in tRNA(Ile2) + L-lysine + ATP = lysidine(34) in tRNA(Ile2) + AMP + diphosphate + H(+). Its function is as follows. Ligates lysine onto the cytidine present at position 34 of the AUA codon-specific tRNA(Ile) that contains the anticodon CAU, in an ATP-dependent manner. Cytidine is converted to lysidine, thus changing the amino acid specificity of the tRNA from methionine to isoleucine. In Streptococcus pneumoniae serotype 2 (strain D39 / NCTC 7466), this protein is tRNA(Ile)-lysidine synthase.